We begin with the raw amino-acid sequence, 633 residues long: DNA mismatch repair protein MutL (633 aa).

A disordered region spans residues 338-407 (AAPEPERTLP…VPPPTLRAIP (70 aa)). Low complexity predominate over residues 366-391 (PGSAFPAAARPAPASSAAQPPLSSSA).

It belongs to the DNA mismatch repair MutL/HexB family.

This protein is involved in the repair of mismatches in DNA. It is required for dam-dependent methyl-directed DNA mismatch repair. May act as a 'molecular matchmaker', a protein that promotes the formation of a stable complex between two or more DNA-binding proteins in an ATP-dependent manner without itself being part of a final effector complex. This is DNA mismatch repair protein MutL from Akkermansia muciniphila (strain ATCC BAA-835 / DSM 22959 / JCM 33894 / BCRC 81048 / CCUG 64013 / CIP 107961 / Muc).